The chain runs to 419 residues: Adenylosuccinate synthetase (419 aa).

GTP contacts are provided by residues 11-17 (GDEGKGK) and 39-41 (GHT). Asp12 functions as the Proton acceptor in the catalytic mechanism. 2 residues coordinate Mg(2+): Asp12 and Gly39. IMP is bound by residues 12–15 (DEGK), 37–40 (NAGH), Thr129, Arg143, Asn218, Thr233, and Arg297. His40 acts as the Proton donor in catalysis. 293–299 (VTTGRKR) lines the substrate pocket. Residues Arg299, 325–327 (KLD), and 407–409 (GTG) contribute to the GTP site.

The protein belongs to the adenylosuccinate synthetase family. Homodimer. It depends on Mg(2+) as a cofactor.

It localises to the cytoplasm. It catalyses the reaction IMP + L-aspartate + GTP = N(6)-(1,2-dicarboxyethyl)-AMP + GDP + phosphate + 2 H(+). Its pathway is purine metabolism; AMP biosynthesis via de novo pathway; AMP from IMP: step 1/2. Functionally, plays an important role in the de novo pathway and in the salvage pathway of purine nucleotide biosynthesis. Catalyzes the first committed step in the biosynthesis of AMP from IMP. The polypeptide is Adenylosuccinate synthetase (Coccidioides posadasii (strain C735) (Valley fever fungus)).